The chain runs to 271 residues: Cyanophycinase (271 aa).

Active-site charge relay system residues include S132, H174, and E201.

This sequence belongs to the peptidase S51 family. As to quaternary structure, homodimer.

The enzyme catalyses [L-4-(L-arginin-2-N-yl)aspartate](n) + H2O = [L-4-(L-arginin-2-N-yl)aspartate](n-1) + L-4-(L-arginin-2-N-yl)aspartate. In terms of biological role, exopeptidase that catalyzes the hydrolytic cleavage of multi-L-arginyl-poly-L-aspartic acid (cyanophycin; a water-insoluble reserve polymer) into aspartate-arginine dipeptides. This Synechocystis sp. (strain ATCC 27184 / PCC 6803 / Kazusa) protein is Cyanophycinase (cphB).